Consider the following 60-residue polypeptide: Homeobox protein EgHBX4 (60 aa).

A DNA-binding region (homeobox) is located at residues 1-60; the sequence is SRRERTIYTPEQLEAMEEVFGVNRYPDVSMREELASRLGINESKIQVWFKNRRAKLRNLE.

Belongs to the paired homeobox family. Bicoid subfamily.

It is found in the nucleus. The sequence is that of Homeobox protein EgHBX4 (HBX4) from Echinococcus granulosus (Hydatid tapeworm).